Here is a 349-residue protein sequence, read N- to C-terminus: Protein disulfide isomerase Creld2 (349 aa).

Residues 1–22 (MHLLLAAGFGLLLLLLPPPAAS) form the signal peptide. The CXXC signature appears at 28–31 (CQRC). Intrachain disulfides connect cysteine 28/cysteine 31, cysteine 137/cysteine 151, cysteine 145/cysteine 163, and cysteine 165/cysteine 174. An EGF-like 1 domain is found at 133 to 175 (DCKECQGGSERPCSGNGYCSGDGSRQGDGSCQCHAGYKGPLCI). The N-linked (GlcNAc...) asparagine glycan is linked to asparagine 187. One copy of the FU 1 repeat lies at 190 to 237 (HSICLACDESCKTCSGPSNKDCVQCEVGWARVEDACVDVDECAAETPP). The N-linked (GlcNAc...) asparagine glycan is linked to asparagine 248. One copy of the FU 2 repeat lies at 250–297 (SYICEECDSTCVGCTGKGPANCKECIAGYTKQSGQCADIDECSLEEKA). Positions 260 to 263 (CVGC) match the CXXC motif. 4 disulfide bridges follow: cysteine 260/cysteine 263, cysteine 291/cysteine 305, cysteine 298/cysteine 314, and cysteine 316/cysteine 327. Residues 287 to 328 (DIDECSLEEKACKRRNENCYNVPGSFVCVCPDGFEETEDACV) form the EGF-like 2; calcium-binding domain.

This sequence belongs to the CRELD family. Interacts with Chrna4. Component of a complex containing at least Creld2, Manf, Matn3 and Pdia4. Broadly expressed in brain (at protein level).

It localises to the endoplasmic reticulum. The catalysed reaction is Catalyzes the rearrangement of -S-S- bonds in proteins.. In terms of biological role, protein disulfide isomerase. Might play a role in the unfolded protein response. May regulate transport of alpha4-beta2 neuronal acetylcholine receptor. The sequence is that of Protein disulfide isomerase Creld2 (Creld2) from Rattus norvegicus (Rat).